A 353-amino-acid chain; its full sequence is Alanine racemase (353 aa).

Residue Lys-33 is the Proton acceptor; specific for D-alanine of the active site. Lys-33 bears the N6-(pyridoxal phosphate)lysine mark. Position 129 (Arg-129) interacts with substrate. The Proton acceptor; specific for L-alanine role is filled by Tyr-250. Met-298 is a substrate binding site.

It belongs to the alanine racemase family. It depends on pyridoxal 5'-phosphate as a cofactor.

It catalyses the reaction L-alanine = D-alanine. The protein operates within amino-acid biosynthesis; D-alanine biosynthesis; D-alanine from L-alanine: step 1/1. Catalyzes the interconversion of L-alanine and D-alanine. May also act on other amino acids. This Aromatoleum aromaticum (strain DSM 19018 / LMG 30748 / EbN1) (Azoarcus sp. (strain EbN1)) protein is Alanine racemase (alr).